The primary structure comprises 114 residues: uncharacterized protein (114 aa).

The next 2 membrane-spanning stretches (helical) occupy residues 14–34 and 75–95; these read VMSA…CFLL and VIII…HPVA.

The protein localises to the membrane. This is an uncharacterized protein from Homo sapiens (Human).